Reading from the N-terminus, the 338-residue chain is Malate dehydrogenase, mitochondrial (338 aa).

The N-terminal 24 residues, 1 to 24 (MLSALARPASAVLRRSFSTSAQNN), are a transit peptide targeting the mitochondrion. NAD(+) is bound by residues 31–37 (GASGGIG) and Asp-57. Ser-33 carries O-linked (GlcNAc) serine glycosylation. 2 positions are modified to N6-acetyllysine; alternate: Lys-78 and Lys-91. Lys-78 and Lys-91 each carry N6-succinyllysine; alternate. Residues Arg-104 and Arg-110 each contribute to the substrate site. NAD(+) contacts are provided by residues Asn-117 and 140–142 (IAN). Asn-142 serves as a coordination point for substrate. At Lys-165 the chain carries N6-acetyllysine. Arg-176 contacts substrate. Lys-185 carries the post-translational modification N6-acetyllysine; alternate. Residue Lys-185 is modified to N6-succinyllysine; alternate. The Proton acceptor role is filled by His-200. The residue at position 203 (Lys-203) is an N6-succinyllysine. Lys-215 and Lys-239 each carry N6-acetyllysine; alternate. N6-succinyllysine; alternate is present on residues Lys-215 and Lys-239. Lys-239 is modified (N6-malonyllysine; alternate). The residue at position 246 (Ser-246) is a Phosphoserine. NAD(+) is bound at residue Met-251. Lys-269 carries the post-translational modification N6-succinyllysine. Residues Lys-296, Lys-301, Lys-307, Lys-314, and Lys-324 each carry the N6-acetyllysine; alternate modification. N6-succinyllysine; alternate is present on residues Lys-296, Lys-301, Lys-307, Lys-314, and Lys-324. Residue Lys-307 is modified to N6-malonyllysine; alternate. The residue at position 326 (Ser-326) is a Phosphoserine. An N6-acetyllysine; alternate mark is found at Lys-328, Lys-329, and Lys-335. Lys-328 is modified (N6-succinyllysine; alternate). Lys-329 is modified (N6-malonyllysine; alternate). Residue Lys-335 is modified to N6-succinyllysine; alternate.

Belongs to the LDH/MDH superfamily. MDH type 1 family. In terms of assembly, homodimer. In terms of processing, acetylation is enhanced after treatment either with trichostin A (TCA) or with nicotinamide (NAM) with the appearance of tri- and tetraacetylations. Glucose also increases acetylation.

It is found in the mitochondrion matrix. The enzyme catalyses (S)-malate + NAD(+) = oxaloacetate + NADH + H(+). Its activity is regulated as follows. Enzyme activity is enhanced by acetylation. This Pongo abelii (Sumatran orangutan) protein is Malate dehydrogenase, mitochondrial (MDH2).